Reading from the N-terminus, the 582-residue chain is Mitogen-activated protein kinase 17 (582 aa).

Residues 22-61 (SSSFHLTTTGDDTVKDLHDPRREDAEGDGWEEVHEGPESD) form a disordered region. Residues 33-45 (DTVKDLHDPRRED) show a composition bias toward basic and acidic residues. The Protein kinase domain maps to 105–396 (YKVSEVIGKG…AEEALTDPYF (292 aa)). ATP is bound by residues 111 to 119 (IGKGSYGVV) and Lys-134. Asp-231 (proton acceptor) is an active-site residue. Position 267 is a phosphothreonine (Thr-267). The TXY signature appears at 267 to 269 (TDY). Tyr-269 bears the Phosphotyrosine mark. 2 disordered regions span residues 474 to 502 (EGVSKGEKSSPQLRQNASLPRERAIGNKH) and 542 to 582 (ISAS…QLKT). Residues 482 to 491 (SSPQLRQNAS) are compositionally biased toward polar residues. Residues 493–502 (PRERAIGNKH) are compositionally biased toward basic and acidic residues. Acidic residues predominate over residues 557-572 (DQEDSLTESMDETADE).

The protein belongs to the protein kinase superfamily. CMGC Ser/Thr protein kinase family. MAP kinase subfamily. Dually phosphorylated on Thr-267 and Tyr-269, which activates the enzyme.

The enzyme catalyses L-seryl-[protein] + ATP = O-phospho-L-seryl-[protein] + ADP + H(+). The catalysed reaction is L-threonyl-[protein] + ATP = O-phospho-L-threonyl-[protein] + ADP + H(+). Activated by threonine and tyrosine phosphorylation. The sequence is that of Mitogen-activated protein kinase 17 (MPK17) from Oryza sativa subsp. japonica (Rice).